The chain runs to 278 residues: Energy-coupling factor transporter ATP-binding protein EcfA1 (278 aa).

The ABC transporter domain occupies 5–240 (IEVRNLKYKY…EDLEELGLDQ (236 aa)). 40-47 (GHNGSGKS) is a binding site for ATP.

The protein belongs to the ABC transporter superfamily. Energy-coupling factor EcfA family. As to quaternary structure, forms a stable energy-coupling factor (ECF) transporter complex composed of 2 membrane-embedded substrate-binding proteins (S component), 2 ATP-binding proteins (A component) and 2 transmembrane proteins (T component).

It is found in the cell membrane. In terms of biological role, ATP-binding (A) component of a common energy-coupling factor (ECF) ABC-transporter complex. Unlike classic ABC transporters this ECF transporter provides the energy necessary to transport a number of different substrates. This is Energy-coupling factor transporter ATP-binding protein EcfA1 from Streptococcus sanguinis (strain SK36).